We begin with the raw amino-acid sequence, 505 residues long: Sodium-coupled neutral amino acid transporter 3 (505 aa).

The segment at 27–48 is disordered; that stretch reads VPTTDTQRTEDTQHCGEGKGFL. Positions 33-43 are enriched in basic and acidic residues; that stretch reads QRTEDTQHCGE. An N-linked (GlcNAc...) asparagine glycan is attached at asparagine 73. Transmembrane regions (helical) follow at residues 82-102, 105-125, 143-163, 186-206, and 212-232; these read GILGLAYAMANTGIILFLFLL, VALLSSYSIHLLLKSSGIVGI, AAALAITLQNIGAMSSYLYII, MDGNYLVILVSVTIILPLALM, and LGYSSGFSLSCMVFFLIAVIY. A disulfide bridge links cysteine 239 with cysteine 276. Residues asparagine 247 and asparagine 251 are each glycosylated (N-linked (GlcNAc...) asparagine). The helical transmembrane segment at 288 to 308 threads the bilayer; sequence AYTIPIMAFAFVCHPEVLPIY. Residue asparagine 324 is glycosylated (N-linked (GlcNAc...) asparagine). Helical transmembrane passes span 325-345, 367-387, 409-429, 432-452, and 472-492; these read LSIAVMYVMYFLAALFGYLTF, ILCVRVAVLIAVTLTVPIVLF, VLIATGLLTCINLLVIFAPNI, IFGIIGATSAPCLIFIFPAIF, and ALCFAAVGFLLMTMSLSFIII.

It belongs to the amino acid/polyamine transporter 2 family. Expressed predominantly in liver, moderately expressed in kidney and brain, and barely detectable in heart and muscle. Within liver, expressed in hepatocytes. Not detected in testis. Expressed in cells of the ganglion cell layer, in soma of some cells of the inner nuclear layer (at protein level). Expressed in the inner segments of photoreceptor cells.

It localises to the cell membrane. It is found in the basolateral cell membrane. The enzyme catalyses L-histidine(out) + Na(+)(out) + H(+)(in) = L-histidine(in) + Na(+)(in) + H(+)(out). The catalysed reaction is L-glutamine(out) + Na(+)(out) + H(+)(in) = L-glutamine(in) + Na(+)(in) + H(+)(out). It carries out the reaction L-asparagine(out) + Na(+)(out) + H(+)(in) = L-asparagine(in) + Na(+)(in) + H(+)(out). Symporter that cotransports specific neutral amino acids and sodium ions, coupled to an H(+) antiporter activity. Mainly participates in the glutamate-GABA-glutamine cycle in brain where it transports L-glutamine from astrocytes in the intercellular space for the replenishment of both neurotransmitters glutamate and gamma-aminobutyric acid (GABA) in neurons and also functions as the major influx transporter in ganglion cells mediating the uptake of glutamine. The transport activity is specific for L-glutamine, L-histidine and L-asparagine. The transport is electroneutral coupled to the cotransport of 1 Na(+) and the antiport of 1 H(+). The transport is pH dependent, saturable, Li(+) tolerant and functions in both direction depending on the concentration gradients of its substrates and cotransported ions. Also mediates an amino acid-gated H(+) conductance that is not stoichiometrically coupled to the amino acid transport but which influences the ionic gradients that drive the amino acid transport. In addition, may play a role in nitrogen metabolism, amino acid homeostasis, glucose metabolism and renal ammoniagenesis. The sequence is that of Sodium-coupled neutral amino acid transporter 3 from Mus musculus (Mouse).